The chain runs to 733 residues: Protein psiM (733 aa).

Positions 1 to 26 are cleaved as a signal peptide; the sequence is MKKINNNKIFVLFLTILLYLLNITTA. Asn-22, Asn-65, and Asn-96 each carry an N-linked (GlcNAc...) asparagine glycan. At 27–672 the chain is on the extracellular side; the sequence is QKPVSINIKI…VCQKAALVST (646 aa). In terms of domain architecture, PA14 spans 114-260; sequence NYDSDSGNYI…YDYCGVCNGD (147 aa). N-linked (GlcNAc...) asparagine glycans are attached at residues Asn-277, Asn-336, Asn-379, Asn-428, Asn-471, Asn-537, Asn-573, and Asn-641. The helical transmembrane segment at 673 to 693 threads the bilayer; it reads AVIASVVVVGAVVLGAAIFAG. Over 694–733 the chain is Cytoplasmic; the sequence is KKGYDAWKTSQGNVMAASQANPLYTQSSNGGENPLYNSPT.

Belongs to the prespore-cell-inducing factor family.

Its subcellular location is the membrane. The chain is Protein psiM (psiM) from Dictyostelium discoideum (Social amoeba).